Here is a 364-residue protein sequence, read N- to C-terminus: Trans-enoyl reductase traG (364 aa).

NADP(+) is bound at residue 51–54 (VDAK). 136-143 (LGLFTAGL) lines the substrate pocket. Residues 176–179 (STAT), 199–202 (SKAN), Y217, and 264–265 (LE) each bind NADP(+). 286-290 (ALTVF) is a binding site for substrate. 355–356 (MS) is a binding site for NADP(+).

Belongs to the zinc-containing alcohol dehydrogenase family. As to quaternary structure, monomer.

It functions in the pathway secondary metabolite biosynthesis. In terms of biological role, trans-enoyl reductase; part of the tra gene cluster that produces terrestric acid. The clavatol biosynthesis cluster cla and the terrestric acid cluster tra are both involved in the production of peniphenones and penilactones. The non-reducing PKS claF is responsible for the formation of clavatol from successive condensations of 3 malonyl-CoA units, presumably with a simple acetyl-CoA starter unit, and 2 methylation steps. The esterase claE probably collaborates with claF by catalyzing the hydrolysis of ACP-bound acyl intermediates to free the ACP from stalled intermediates. The clavatol oxidase claD then converts clavatol to hydroxyclavatol. Spontaneous dehydration of hydroxyclavatol leads to the accumulation of the highly active ortho-quinone methide. On the other hand, the PKS-NRPS hybrid traA is involved in the formation of crustosic acid, with the help of traB and traD. The polyketide synthase module (PKS) of traA is responsible for the synthesis of the polyketide backbone via the condensation of an acetyl-CoA starter unit with 3 malonyl-CoA units. The downstream nonribosomal peptide synthetase (NRPS) module then amidates the carboxyl end of the polyketide with L-malic acid. Because traA lacks a designated enoylreductase (ER) domain, the required activity is provided the enoyl reductase traG. Crustosic acid undergoes decarboxylation and isomerization to the terrestric acid, catalyzed by the 2-oxoglutarate-dependent dioxygenase traH. Both acids are further converted to the 2 gamma-butyrolactones (R)-5-methyltetronic acid and (S)-5-carboxylmethyltetronic acid, with involvement of the cytochrome P450 monooxygenase claJ. Spontaneous addition of the methide to these gamma-butyrolactones leads to peniphenone D and penilactone D, which undergo again stereospecific attacking by methide to give penilactones A and B. The polypeptide is Trans-enoyl reductase traG (Penicillium crustosum (Blue mold fungus)).